The chain runs to 124 residues: uncharacterized protein (124 aa).

The disordered stretch occupies residues 44–92 (DRVENSGNGTGSISAPLTDLGPSIGDSHENKGADIPIHPPLDTQSHAKD). Residues 48 to 58 (NSGNGTGSISA) show a composition bias toward polar residues.

This is an uncharacterized protein from Caenorhabditis elegans.